The chain runs to 161 residues: 3-isopropylmalate dehydratase small subunit (161 aa).

The protein belongs to the LeuD family. LeuD type 2 subfamily. Heterodimer of LeuC and LeuD.

The catalysed reaction is (2R,3S)-3-isopropylmalate = (2S)-2-isopropylmalate. The protein operates within amino-acid biosynthesis; L-leucine biosynthesis; L-leucine from 3-methyl-2-oxobutanoate: step 2/4. Functionally, catalyzes the isomerization between 2-isopropylmalate and 3-isopropylmalate, via the formation of 2-isopropylmaleate. This is 3-isopropylmalate dehydratase small subunit from Clostridium botulinum (strain Eklund 17B / Type B).